The following is a 252-amino-acid chain: L-aspartate dehydrogenase (252 aa).

Positions 119 and 175 each coordinate NAD(+). Histidine 203 is an active-site residue.

Belongs to the L-aspartate dehydrogenase family.

The enzyme catalyses L-aspartate + NADP(+) + H2O = oxaloacetate + NH4(+) + NADPH + H(+). It carries out the reaction L-aspartate + NAD(+) + H2O = oxaloacetate + NH4(+) + NADH + H(+). It participates in cofactor biosynthesis; NAD(+) biosynthesis; iminoaspartate from L-aspartate (dehydrogenase route): step 1/1. Its function is as follows. Specifically catalyzes the NAD or NADP-dependent dehydrogenation of L-aspartate to iminoaspartate. The polypeptide is L-aspartate dehydrogenase (Methanospirillum hungatei JF-1 (strain ATCC 27890 / DSM 864 / NBRC 100397 / JF-1)).